The primary structure comprises 208 residues: MRDPIDVYNNALVPMVVEQSSRGERAFDIYSRLLRERIIFLTGPVEDYGASLIVAQLLFLEAENPKKEISFYINSPGGVVTSGLSIYDTMQFIRCPVTTLCVGQAASMGSLLLTAGEPGHRFALPNARIMVHQPSGGFQGQATDILIHAREIEALKRRLNEIYVKHTGRDYDTIHTALERDNFMTADAAKEFGLIDEVIEKRPEPAAA.

The Nucleophile role is filled by Ser-107. His-132 is an active-site residue.

The protein belongs to the peptidase S14 family. In terms of assembly, fourteen ClpP subunits assemble into 2 heptameric rings which stack back to back to give a disk-like structure with a central cavity, resembling the structure of eukaryotic proteasomes.

The protein localises to the cytoplasm. The enzyme catalyses Hydrolysis of proteins to small peptides in the presence of ATP and magnesium. alpha-casein is the usual test substrate. In the absence of ATP, only oligopeptides shorter than five residues are hydrolyzed (such as succinyl-Leu-Tyr-|-NHMec, and Leu-Tyr-Leu-|-Tyr-Trp, in which cleavage of the -Tyr-|-Leu- and -Tyr-|-Trp bonds also occurs).. Its function is as follows. Cleaves peptides in various proteins in a process that requires ATP hydrolysis. Has a chymotrypsin-like activity. Plays a major role in the degradation of misfolded proteins. This is ATP-dependent Clp protease proteolytic subunit from Methylobacterium radiotolerans (strain ATCC 27329 / DSM 1819 / JCM 2831 / NBRC 15690 / NCIMB 10815 / 0-1).